Reading from the N-terminus, the 541-residue chain is Protein wntless homolog B (541 aa).

The Cytoplasmic segment spans residues 1–15 (MAGAIIENMSTKKLC). A helical transmembrane segment spans residues 16 to 36 (MVGVALLLLQVLAFLVGGLIA). The Lumenal segment spans residues 37 to 232 (PKPTTYVNPV…SIFQNGGFTM (196 aa)). Residues 233–253 (VWFAMKTFLTPCIIIIMIWYW) form a helical membrane-spanning segment. At 254–268 (RRITMMTRSPVLLEK) the chain is on the cytoplasmic side. A helical membrane pass occupies residues 269–289 (VIFALGISMTFINIPVEWFSI). Over 290-303 (GYDWTWMLLFGDIR) the chain is Lumenal. Residues 304–324 (QGIFYAMLLSFWIIFCGEHMM) form a helical membrane-spanning segment. Residues 325 to 331 (DQAERNR) lie on the Cytoplasmic side of the membrane. Residues 332 to 352 (ISIYWKQVGPIAFGSCCLFIF) form a helical membrane-spanning segment. The Lumenal segment spans residues 353 to 379 (DMCERGVQLKNPFYSIWTTDVGAEIAM). Residues 380-400 (AFIIVAGICACLYFLFLCFMV) form a helical membrane-spanning segment. Over 401 to 431 (YQVFRNISGKRSNLPAMSKARRLHYEGLIFR) the chain is Cytoplasmic. A helical transmembrane segment spans residues 432–452 (FKFLMIITLACAALTVVFFIT). Topologically, residues 453–471 (TQITEGNWKLGDLSIELNS) are lumenal. The chain crosses the membrane as a helical span at residues 472-492 (AFFTGIYGMWNLYVFALMFLY). The Cytoplasmic segment spans residues 493–541 (APSHKHYGDGQSNDGAGMSSGEELQLTTTITHIDGPTELYRLAGKEAQE).

Belongs to the wntless family. As to expression, enriched in the animal hemisphere of the early cleavage embryo, where expression persists until the late gastrula stage. At the neurula stage, strongly expressed at the border of the neural plate and dorsal midline. After the neurula stage, expressed in various organs, including the eye, liver, heart, pronephros, otic vesicle, and dorsal neural tube. Expression in the developing eye is dynamic; expressed in the eye field from stages 23 to 27, and from stage 30 expression is confined to distinct regions including the central part and border of the eye.

It is found in the golgi apparatus membrane. Its subcellular location is the cytoplasmic vesicle membrane. In terms of biological role, required for a subset of Wnt-dependent developmental processes, in particular, eye and pronephros development. Regulates the secretion of wnt4, which is required for eye development. The sequence is that of Protein wntless homolog B (wls-b) from Xenopus laevis (African clawed frog).